Reading from the N-terminus, the 375-residue chain is Anhydro-N-acetylmuramic acid kinase 1 (375 aa).

20–27 is a binding site for ATP; it reads GTSFDGVD. The tract at residues 351 to 375 is disordered; sequence APSTTGVAAPVGGGRRSKPGARELS.

It belongs to the anhydro-N-acetylmuramic acid kinase family.

It carries out the reaction 1,6-anhydro-N-acetyl-beta-muramate + ATP + H2O = N-acetyl-D-muramate 6-phosphate + ADP + H(+). The protein operates within amino-sugar metabolism; 1,6-anhydro-N-acetylmuramate degradation. It functions in the pathway cell wall biogenesis; peptidoglycan recycling. Its function is as follows. Catalyzes the specific phosphorylation of 1,6-anhydro-N-acetylmuramic acid (anhMurNAc) with the simultaneous cleavage of the 1,6-anhydro ring, generating MurNAc-6-P. Is required for the utilization of anhMurNAc either imported from the medium or derived from its own cell wall murein, and thus plays a role in cell wall recycling. The protein is Anhydro-N-acetylmuramic acid kinase 1 of Jannaschia sp. (strain CCS1).